We begin with the raw amino-acid sequence, 215 residues long: UPF0502 protein PP_2442 (215 aa).

This sequence belongs to the UPF0502 family.

The protein is UPF0502 protein PP_2442 of Pseudomonas putida (strain ATCC 47054 / DSM 6125 / CFBP 8728 / NCIMB 11950 / KT2440).